The sequence spans 216 residues: ATP phosphoribosyltransferase (216 aa).

This sequence belongs to the ATP phosphoribosyltransferase family. Short subfamily. In terms of assembly, heteromultimer composed of HisG and HisZ subunits.

The protein localises to the cytoplasm. The enzyme catalyses 1-(5-phospho-beta-D-ribosyl)-ATP + diphosphate = 5-phospho-alpha-D-ribose 1-diphosphate + ATP. It functions in the pathway amino-acid biosynthesis; L-histidine biosynthesis; L-histidine from 5-phospho-alpha-D-ribose 1-diphosphate: step 1/9. Catalyzes the condensation of ATP and 5-phosphoribose 1-diphosphate to form N'-(5'-phosphoribosyl)-ATP (PR-ATP). Has a crucial role in the pathway because the rate of histidine biosynthesis seems to be controlled primarily by regulation of HisG enzymatic activity. The chain is ATP phosphoribosyltransferase from Prochlorococcus marinus (strain MIT 9211).